A 207-amino-acid chain; its full sequence is Uracil phosphoribosyltransferase (207 aa).

5-phospho-alpha-D-ribose 1-diphosphate is bound by residues R77, R102, and 129–137; that span reads DPMLATGGS. Residues I192 and 197–199 each bind uracil; that span reads GDA. D198 lines the 5-phospho-alpha-D-ribose 1-diphosphate pocket.

The protein belongs to the UPRTase family. The cofactor is Mg(2+).

It catalyses the reaction UMP + diphosphate = 5-phospho-alpha-D-ribose 1-diphosphate + uracil. The protein operates within pyrimidine metabolism; UMP biosynthesis via salvage pathway; UMP from uracil: step 1/1. Its activity is regulated as follows. Allosterically activated by GTP. Functionally, catalyzes the conversion of uracil and 5-phospho-alpha-D-ribose 1-diphosphate (PRPP) to UMP and diphosphate. This is Uracil phosphoribosyltransferase from Mycobacterium marinum (strain ATCC BAA-535 / M).